We begin with the raw amino-acid sequence, 426 residues long: Glucose-6-phosphate isomerase (426 aa).

Residue E282 is the Proton donor of the active site. Active-site residues include H303 and K419.

It belongs to the GPI family.

It is found in the cytoplasm. It catalyses the reaction alpha-D-glucose 6-phosphate = beta-D-fructose 6-phosphate. It functions in the pathway carbohydrate biosynthesis; gluconeogenesis. It participates in carbohydrate degradation; glycolysis; D-glyceraldehyde 3-phosphate and glycerone phosphate from D-glucose: step 2/4. Its function is as follows. Catalyzes the reversible isomerization of glucose-6-phosphate to fructose-6-phosphate. The protein is Glucose-6-phosphate isomerase of Mycoplasmoides gallisepticum (strain R(low / passage 15 / clone 2)) (Mycoplasma gallisepticum).